Here is a 110-residue protein sequence, read N- to C-terminus: UPF0060 membrane protein Veis_0342 (110 aa).

Helical transmembrane passes span 8–28 (VLFTITAVVEIVGCYLPWLVI), 33–53 (PLWLLLPAALSLALFAWLLTL), 63–83 (AAYGGIYIAVALAWLHWVDGV), and 90–110 (VAGATVAMVGMLIIMLQPASA).

This sequence belongs to the UPF0060 family.

It is found in the cell inner membrane. The polypeptide is UPF0060 membrane protein Veis_0342 (Verminephrobacter eiseniae (strain EF01-2)).